The sequence spans 344 residues: Dihydroorotase (344 aa).

Positions 14 and 16 each coordinate Zn(2+). Substrate contacts are provided by residues 16 to 18 (HLR) and Asn42. The Zn(2+) site is built by Lys100, His137, and His175. Residue Lys100 is modified to N6-carboxylysine. His137 serves as a coordination point for substrate. Leu220 contacts substrate. Position 248 (Asp248) interacts with Zn(2+). Asp248 is a catalytic residue. Positions 252 and 264 each coordinate substrate.

The protein belongs to the metallo-dependent hydrolases superfamily. DHOase family. Class II DHOase subfamily. In terms of assembly, homodimer. Requires Zn(2+) as cofactor.

It catalyses the reaction (S)-dihydroorotate + H2O = N-carbamoyl-L-aspartate + H(+). Its pathway is pyrimidine metabolism; UMP biosynthesis via de novo pathway; (S)-dihydroorotate from bicarbonate: step 3/3. In terms of biological role, catalyzes the reversible cyclization of carbamoyl aspartate to dihydroorotate. The chain is Dihydroorotase from Ralstonia pickettii (strain 12J).